The primary structure comprises 1018 residues: Probable ATP-dependent RNA helicase DDX46 (1018 aa).

The segment covering 1 to 14 (MGRESRHYRKRSSS) has biased composition (basic residues). The tract at residues 1-200 (MGRESRHYRK…EVGEEVDPLD (200 aa)) is disordered. Residues 15–24 (RGRSGSLSKS) show a composition bias toward low complexity. The span at 25–39 (RSPDSKRSKKDDRTA) shows a compositional bias: basic and acidic residues. Basic residues predominate over residues 40 to 87 (SRTHSRRERSRSRERRRSRERKRQRRSSRDRRRSRSRERRRSKSRSRG). Basic and acidic residues predominate over residues 88–112 (RSKEKPENGDQTADKKKIKEEKEEE). The segment covering 113–125 (KPEDQDFDQNTLE) has biased composition (acidic residues). The span at 126–168 (EEMRKRKERVEKWREEQRKTAMENIGEIKKELEEMKQGKKWSL) shows a compositional bias: basic and acidic residues. Residues 169-200 (EDDDEEQDKAAEAEESERMEEEEVGEEVDPLD) are compositionally biased toward acidic residues. Residues 340–368 (KTWVQCGISMKVLNALKKHNYEKPTPIQA) carry the Q motif motif. One can recognise a Helicase ATP-binding domain in the interval 371–549 (IPAIMSGRDL…RRILSKPVEV (179 aa)). Residue 384-391 (AKTGSGKT) participates in ATP binding. The DEAD box signature appears at 497–500 (DEAD). The region spanning 560-721 (DVEQHVIVIE…SVPAELEQLW (162 aa)) is the Helicase C-terminal domain. A coiled-coil region spans residues 900–927 (VEKLEEERQAAEAAETVKRYEEELEIND).

It belongs to the DEAD box helicase family. DDX46/PRP5 subfamily. Component of the 17S U2 SnRNP complex, a ribonucleoprotein complex that contains small nuclear RNA (snRNA) U2 and a number of specific proteins.

It localises to the nucleus speckle. The protein localises to the nucleus. Its subcellular location is the cajal body. The catalysed reaction is ATP + H2O = ADP + phosphate + H(+). Its function is as follows. Component of the 17S U2 SnRNP complex of the spliceosome, a large ribonucleoprotein complex that removes introns from transcribed pre-mRNAs. The 17S U2 SnRNP complex (1) directly participates in early spliceosome assembly and (2) mediates recognition of the intron branch site during pre-mRNA splicing by promoting the selection of the pre-mRNA branch-site adenosine, the nucleophile for the first step of splicing. Within the 17S U2 SnRNP complex, DDX46 plays essential roles during assembly of pre-spliceosome and proofreading of the branch site. The chain is Probable ATP-dependent RNA helicase DDX46 (ddx46) from Danio rerio (Zebrafish).